A 280-amino-acid chain; its full sequence is MSLVTSLTYVLPHRLLSSLARALAYSQTPSTKQWLIDTVTRKFGVDLSEAQEPDPHAYPTFNAFFTRALKPGARVPDADPSAVLMPADGRISQLGPVENGRIFQAKGQSFTAAELLGDEAAAAPFNDGVFATVYLSPKDYHRVHMPWTGTLRETVHVPGRLFSVGPDAVRKVPRLFARNERLVCHFDTEFGPMASVMVGALLVSGVETVWSGVEIPRYGDRITRKDYRGKGVVLEKFAEMARFNYGSTVIVLLPPGVATLDGGLAAETSVRLGQALARRQ.

Active-site charge relay system; for autoendoproteolytic cleavage activity residues include Asp88, His144, and Ser247. Ser247 functions as the Schiff-base intermediate with substrate; via pyruvic acid; for decarboxylase activity in the catalytic mechanism. The residue at position 247 (Ser247) is a Pyruvic acid (Ser); by autocatalysis.

This sequence belongs to the phosphatidylserine decarboxylase family. PSD-B subfamily. Prokaryotic type I sub-subfamily. In terms of assembly, heterodimer of a large membrane-associated beta subunit and a small pyruvoyl-containing alpha subunit. It depends on pyruvate as a cofactor. Is synthesized initially as an inactive proenzyme. Formation of the active enzyme involves a self-maturation process in which the active site pyruvoyl group is generated from an internal serine residue via an autocatalytic post-translational modification. Two non-identical subunits are generated from the proenzyme in this reaction, and the pyruvate is formed at the N-terminus of the alpha chain, which is derived from the carboxyl end of the proenzyme. The autoendoproteolytic cleavage occurs by a canonical serine protease mechanism, in which the side chain hydroxyl group of the serine supplies its oxygen atom to form the C-terminus of the beta chain, while the remainder of the serine residue undergoes an oxidative deamination to produce ammonia and the pyruvoyl prosthetic group on the alpha chain. During this reaction, the Ser that is part of the protease active site of the proenzyme becomes the pyruvoyl prosthetic group, which constitutes an essential element of the active site of the mature decarboxylase.

It is found in the cell membrane. The enzyme catalyses a 1,2-diacyl-sn-glycero-3-phospho-L-serine + H(+) = a 1,2-diacyl-sn-glycero-3-phosphoethanolamine + CO2. It participates in phospholipid metabolism; phosphatidylethanolamine biosynthesis; phosphatidylethanolamine from CDP-diacylglycerol: step 2/2. Catalyzes the formation of phosphatidylethanolamine (PtdEtn) from phosphatidylserine (PtdSer). The polypeptide is Phosphatidylserine decarboxylase proenzyme (Xanthomonas axonopodis pv. citri (strain 306)).